We begin with the raw amino-acid sequence, 248 residues long: 2,3-bisphosphoglycerate-dependent phosphoglycerate mutase (248 aa).

Substrate contacts are provided by residues 8 to 15 (RHGESTWN), 21 to 22 (TG), Arg60, 87 to 90 (ERHY), Lys98, 114 to 115 (RR), and 183 to 184 (GN). His9 serves as the catalytic Tele-phosphohistidine intermediate. Catalysis depends on Glu87, which acts as the Proton donor/acceptor.

The protein belongs to the phosphoglycerate mutase family. BPG-dependent PGAM subfamily. In terms of assembly, homodimer.

It carries out the reaction (2R)-2-phosphoglycerate = (2R)-3-phosphoglycerate. The protein operates within carbohydrate degradation; glycolysis; pyruvate from D-glyceraldehyde 3-phosphate: step 3/5. Its function is as follows. Catalyzes the interconversion of 2-phosphoglycerate and 3-phosphoglycerate. This is 2,3-bisphosphoglycerate-dependent phosphoglycerate mutase from Burkholderia vietnamiensis (strain G4 / LMG 22486) (Burkholderia cepacia (strain R1808)).